The following is a 548-amino-acid chain: Chaperonin GroEL (548 aa).

Residues 29-32 (TLGP), lysine 50, 86-90 (DGTTT), glycine 414, 478-480 (NAA), and aspartate 494 contribute to the ATP site.

This sequence belongs to the chaperonin (HSP60) family. In terms of assembly, forms a cylinder of 14 subunits composed of two heptameric rings stacked back-to-back. Interacts with the co-chaperonin GroES.

It localises to the cytoplasm. It catalyses the reaction ATP + H2O + a folded polypeptide = ADP + phosphate + an unfolded polypeptide.. Together with its co-chaperonin GroES, plays an essential role in assisting protein folding. The GroEL-GroES system forms a nano-cage that allows encapsulation of the non-native substrate proteins and provides a physical environment optimized to promote and accelerate protein folding. This Psychrobacter sp. (strain PRwf-1) protein is Chaperonin GroEL.